The chain runs to 227 residues: 7-cyano-7-deazaguanine synthase (227 aa).

Position 8–18 (8–18 (LSGGLDSATVL)) interacts with ATP. Zn(2+)-binding residues include cysteine 191, cysteine 201, cysteine 204, and cysteine 207.

This sequence belongs to the QueC family. It depends on Zn(2+) as a cofactor.

The enzyme catalyses 7-carboxy-7-deazaguanine + NH4(+) + ATP = 7-cyano-7-deazaguanine + ADP + phosphate + H2O + H(+). The protein operates within purine metabolism; 7-cyano-7-deazaguanine biosynthesis. Functionally, catalyzes the ATP-dependent conversion of 7-carboxy-7-deazaguanine (CDG) to 7-cyano-7-deazaguanine (preQ(0)). This chain is 7-cyano-7-deazaguanine synthase, found in Paramagnetospirillum magneticum (strain ATCC 700264 / AMB-1) (Magnetospirillum magneticum).